Consider the following 281-residue polypeptide: NADPH-dependent 7-cyano-7-deazaguanine reductase (281 aa).

Residue Val87–Ser89 coordinates substrate. Ser89–Lys90 is an NADPH binding site. The Thioimide intermediate role is filled by Cys188. Catalysis depends on Asp195, which acts as the Proton donor. Residue His227–Glu228 coordinates substrate. Residue Arg256–Gly257 participates in NADPH binding.

This sequence belongs to the GTP cyclohydrolase I family. QueF type 2 subfamily. In terms of assembly, homodimer.

The protein localises to the cytoplasm. The enzyme catalyses 7-aminomethyl-7-carbaguanine + 2 NADP(+) = 7-cyano-7-deazaguanine + 2 NADPH + 3 H(+). Its pathway is tRNA modification; tRNA-queuosine biosynthesis. In terms of biological role, catalyzes the NADPH-dependent reduction of 7-cyano-7-deazaguanine (preQ0) to 7-aminomethyl-7-deazaguanine (preQ1). This is NADPH-dependent 7-cyano-7-deazaguanine reductase from Aliivibrio fischeri (strain MJ11) (Vibrio fischeri).